Here is a 469-residue protein sequence, read N- to C-terminus: Tetratricopeptide repeat protein 38 (469 aa).

A2 is subject to N-acetylalanine. S5 carries the phosphoserine modification. TPR repeat units follow at residues 108-141 (REQL…HPTD), 180-213 (SYVK…NPTD), and 252-285 (CHNY…SLQA).

Belongs to the TTC38 family.

This is Tetratricopeptide repeat protein 38 (TTC38) from Pongo abelii (Sumatran orangutan).